Reading from the N-terminus, the 310-residue chain is Porphobilinogen deaminase (310 aa).

Cysteine 242 is subject to S-(dipyrrolylmethanemethyl)cysteine.

The protein belongs to the HMBS family. Monomer. The cofactor is dipyrromethane.

It carries out the reaction 4 porphobilinogen + H2O = hydroxymethylbilane + 4 NH4(+). Its pathway is porphyrin-containing compound metabolism; protoporphyrin-IX biosynthesis; coproporphyrinogen-III from 5-aminolevulinate: step 2/4. In terms of biological role, tetrapolymerization of the monopyrrole PBG into the hydroxymethylbilane pre-uroporphyrinogen in several discrete steps. This Shewanella oneidensis (strain ATCC 700550 / JCM 31522 / CIP 106686 / LMG 19005 / NCIMB 14063 / MR-1) protein is Porphobilinogen deaminase.